The chain runs to 303 residues: B1 kinase (303 aa).

It belongs to the protein kinase superfamily. Ser/Thr protein kinase family. Poxviruses subfamily. As to quaternary structure, interacts with host JIP1; this interaction increases the amount of MAPK bound to JIP1 and subsequently increases the activity of transcription factors, such as JUN, that respond to these complexes. Interacts with protein OPG198; this interaction inhibits the repressive activity of OPG198 pseudokinase on viral replication factory formation. Mg(2+) serves as cofactor. Post-translationally, autophosphorylated.

The protein resides in the virion. It is found in the host cytoplasm. It catalyses the reaction L-seryl-[protein] + ATP = O-phospho-L-seryl-[protein] + ADP + H(+). The catalysed reaction is L-threonyl-[protein] + ATP = O-phospho-L-threonyl-[protein] + ADP + H(+). Its function is as follows. Essential serine/threonine-protein kinase that plays different role in the viral life cycle. Phosphorylates the host small ribosomal protein RACK1 thereby customizing the ribosomes to a state optimal for viral mRNAs (which contain poly-A leaders) but not for host mRNAs. Facilitates viral DNA replication by inhibiting host BANF1, a cellular host defense responsive to foreign DNA. Phosphorylates host BANF1 on serine and threonine residues; this leads to BANF1 relocalization to the cytoplasm, loss of dimerization and impaired DNA binding activity. Indeed, BANF1 activity depends on its DNA-binding property which is blocked by VPK1-mediated phosphorylation. Required for viral intermediate genes expression, probably by inhibiting host BANF1. Modulates cellular responses via host JUN by two different mechanisms, either by direct phosphorylation or by modulation of upstream JIP1-MAPK complexes. Seems to participate in the accumulation/processing of late proteins and thus in virion maturation. In addition, inhibits B12 repressive activity on viral DNA replication via a phosphorylation-dependent mechanism. This chain is B1 kinase (OPG187), found in Cynomys gunnisoni (Gunnison's prairie dog).